Consider the following 486-residue polypeptide: Ribosomal RNA small subunit methyltransferase F (486 aa).

S-adenosyl-L-methionine is bound by residues 124-130, Glu148, Asp175, and Asp193; that span reads ASAPGSK. The Nucleophile role is filled by Cys246.

This sequence belongs to the class I-like SAM-binding methyltransferase superfamily. RsmB/NOP family.

Its subcellular location is the cytoplasm. It carries out the reaction cytidine(1407) in 16S rRNA + S-adenosyl-L-methionine = 5-methylcytidine(1407) in 16S rRNA + S-adenosyl-L-homocysteine + H(+). Specifically methylates the cytosine at position 1407 (m5C1407) of 16S rRNA. The protein is Ribosomal RNA small subunit methyltransferase F of Shewanella baltica (strain OS223).